The primary structure comprises 263 residues: Uroporphyrinogen-III C-methyltransferase (263 aa).

Residues Pro-20, 96 to 98, 126 to 127, Met-180, and Ala-237 contribute to the S-adenosyl-L-homocysteine site; these read GGD and TA.

This sequence belongs to the precorrin methyltransferase family.

It catalyses the reaction uroporphyrinogen III + 2 S-adenosyl-L-methionine = precorrin-2 + 2 S-adenosyl-L-homocysteine + H(+). It functions in the pathway cofactor biosynthesis; adenosylcobalamin biosynthesis; precorrin-2 from uroporphyrinogen III: step 1/1. It participates in porphyrin-containing compound metabolism; siroheme biosynthesis; precorrin-2 from uroporphyrinogen III: step 1/1. Functionally, catalyzes the two successive C-2 and C-7 methylation reactions involved in the conversion of uroporphyrinogen III to precorrin-2 via the intermediate formation of precorrin-1. It is a step in the biosynthesis of both cobalamin (vitamin B12) and siroheme. The protein is Uroporphyrinogen-III C-methyltransferase (cobA) of Synechocystis sp. (strain ATCC 27184 / PCC 6803 / Kazusa).